We begin with the raw amino-acid sequence, 68 residues long: uncharacterized protein (68 aa).

This is an uncharacterized protein from Rickettsia prowazekii (strain Madrid E).